A 564-amino-acid polypeptide reads, in one-letter code: MFS-type efflux transporter ffsH (564 aa).

Residues 1–18 show a composition bias toward basic and acidic residues; the sequence is MSEAEKKASQDAQHKEPM. The disordered stretch occupies residues 1–37; sequence MSEAEKKASQDAQHKEPMADSETQLDSDSAPSSQAEK. Residues 21–35 show a composition bias toward polar residues; the sequence is SETQLDSDSAPSSQA. The next 4 membrane-spanning stretches (helical) occupy residues 43–63, 98–118, 131–151, and 157–177; these read YPLS…ISAM, YVMI…GGAN, GIGA…LVPM, and FIGL…IIGG. Residue N182 is glycosylated (N-linked (GlcNAc...) asparagine). The next 9 helical transmembrane spans lie at 187-207, 226-246, 254-274, 300-320, 334-354, 362-382, 389-409, 427-447, and 502-522; these read WVFY…VLFL, VVGN…LTYG, AANI…FIAW, FFIS…YPVY, VHLL…GGLV, PIHM…SVLT, AWAV…STTL, TWAY…AAIF, and VWLV…FEKE. The interval 540-564 is disordered; the sequence is GDAKGDVERGEGQNDSREGGQNENV. N553 carries N-linked (GlcNAc...) asparagine glycosylation.

Belongs to the major facilitator superfamily.

The protein resides in the cell membrane. Its function is as follows. MFS-type efflux transporter; part of the gene cluster that mediates the biosynthesis of the cytotoxic leucine-containing cytochalasans, including aspochalasin C, aspochalasin E, TMC-169, flavichalasine F, aspergillin PZ, aspochalasin M and flavichalasine G. FfsH might be involved in the excretion of cytochalasans. The chain is MFS-type efflux transporter ffsH from Aspergillus flavipes.